Consider the following 74-residue polypeptide: uncharacterized protein (74 aa).

A run of 2 helical transmembrane segments spans residues 3–23 (YSAL…CFSF) and 35–55 (ILFF…MLLT).

It is found in the cell membrane. This is an uncharacterized protein from Mycoplasma genitalium (strain ATCC 33530 / DSM 19775 / NCTC 10195 / G37) (Mycoplasmoides genitalium).